The following is a 154-amino-acid chain: 6,7-dimethyl-8-ribityllumazine synthase (154 aa).

5-amino-6-(D-ribitylamino)uracil is bound by residues Phe-22, 57–59 (VCE), and 81–83 (TVI). A (2S)-2-hydroxy-3-oxobutyl phosphate-binding site is contributed by 86–87 (KT). His-89 functions as the Proton donor in the catalytic mechanism. A 5-amino-6-(D-ribitylamino)uracil-binding site is contributed by Val-114. Residue Arg-128 coordinates (2S)-2-hydroxy-3-oxobutyl phosphate.

This sequence belongs to the DMRL synthase family. Forms an icosahedral capsid composed of 60 subunits, arranged as a dodecamer of pentamers.

The catalysed reaction is (2S)-2-hydroxy-3-oxobutyl phosphate + 5-amino-6-(D-ribitylamino)uracil = 6,7-dimethyl-8-(1-D-ribityl)lumazine + phosphate + 2 H2O + H(+). It participates in cofactor biosynthesis; riboflavin biosynthesis; riboflavin from 2-hydroxy-3-oxobutyl phosphate and 5-amino-6-(D-ribitylamino)uracil: step 1/2. In terms of biological role, catalyzes the formation of 6,7-dimethyl-8-ribityllumazine by condensation of 5-amino-6-(D-ribitylamino)uracil with 3,4-dihydroxy-2-butanone 4-phosphate. This is the penultimate step in the biosynthesis of riboflavin. This is 6,7-dimethyl-8-ribityllumazine synthase from Wigglesworthia glossinidia brevipalpis.